Here is a 526-residue protein sequence, read N- to C-terminus: mRNA export factor ICP27 homolog (526 aa).

Zn(2+) contacts are provided by Cys239, His344, Cys346, and Cys351. The CHC2-type zinc-finger motif lies at 239-351 (CVFNDNGHGD…NNHQCDDIGC (113 aa)).

The protein belongs to the HHV-1 ICP27 protein family.

The protein localises to the virion tegument. It is found in the virion. The protein resides in the host nucleus. Its subcellular location is the host cytoplasm. Its function is as follows. Immediate early (EI) protein that plays many roles during productive infection including regulation of viral gene expression and nuclear export of intronless viral RNAs. The chain is mRNA export factor ICP27 homolog from Human herpesvirus 7 (strain JI) (HHV-7).